The chain runs to 165 residues: Large ribosomal subunit protein uL10 (165 aa).

Lys37 and Lys105 each carry N6-acetyllysine.

It belongs to the universal ribosomal protein uL10 family. As to quaternary structure, part of the ribosomal stalk of the 50S ribosomal subunit. The N-terminus interacts with L11 and the large rRNA to form the base of the stalk. The C-terminus forms an elongated spine to which L12 dimers bind in a sequential fashion forming a multimeric L10(L12)X complex.

Protein L10 is also a translational repressor protein. It controls the translation of the rplJL-rpoBC operon by binding to its mRNA. Functionally, forms part of the ribosomal stalk, playing a central role in the interaction of the ribosome with GTP-bound translation factors. The polypeptide is Large ribosomal subunit protein uL10 (rplJ) (Escherichia coli O6:H1 (strain CFT073 / ATCC 700928 / UPEC)).